The primary structure comprises 169 residues: MQNTIRIIGIDPGLRRTGWGIIDTLGNSLKFVASGTVTSDGEMDLASRLCQLHDGLADIVHAHKPDEAAVEQTFVNKDAVATLKLGQARGIAMLVPARAGLPVSEYAPNAVKKAVIGVGHGEKQQIHMMLKILMPKAEFKGDDAADALAIAICHAHNRGGHRMRQALAG.

Active-site residues include D11, E71, and D143. The Mg(2+) site is built by D11, E71, and D143.

Belongs to the RuvC family. As to quaternary structure, homodimer which binds Holliday junction (HJ) DNA. The HJ becomes 2-fold symmetrical on binding to RuvC with unstacked arms; it has a different conformation from HJ DNA in complex with RuvA. In the full resolvosome a probable DNA-RuvA(4)-RuvB(12)-RuvC(2) complex forms which resolves the HJ. The cofactor is Mg(2+).

It localises to the cytoplasm. The enzyme catalyses Endonucleolytic cleavage at a junction such as a reciprocal single-stranded crossover between two homologous DNA duplexes (Holliday junction).. Its function is as follows. The RuvA-RuvB-RuvC complex processes Holliday junction (HJ) DNA during genetic recombination and DNA repair. Endonuclease that resolves HJ intermediates. Cleaves cruciform DNA by making single-stranded nicks across the HJ at symmetrical positions within the homologous arms, yielding a 5'-phosphate and a 3'-hydroxyl group; requires a central core of homology in the junction. The consensus cleavage sequence is 5'-(A/T)TT(C/G)-3'. Cleavage occurs on the 3'-side of the TT dinucleotide at the point of strand exchange. HJ branch migration catalyzed by RuvA-RuvB allows RuvC to scan DNA until it finds its consensus sequence, where it cleaves and resolves the cruciform DNA. The protein is Crossover junction endodeoxyribonuclease RuvC of Rhizobium etli (strain ATCC 51251 / DSM 11541 / JCM 21823 / NBRC 15573 / CFN 42).